The chain runs to 499 residues: Phenylalanine--tRNA ligase alpha subunit (499 aa).

Residues T330, 372–374, and Y412 contribute to the L-phenylalanine site; that span reads QVE. A Mg(2+)-binding site is contributed by E414. An L-phenylalanine-binding site is contributed by F438.

Belongs to the class-II aminoacyl-tRNA synthetase family. Phe-tRNA synthetase alpha subunit type 2 subfamily. As to quaternary structure, tetramer of two alpha and two beta subunits. Requires Mg(2+) as cofactor.

Its subcellular location is the cytoplasm. The catalysed reaction is tRNA(Phe) + L-phenylalanine + ATP = L-phenylalanyl-tRNA(Phe) + AMP + diphosphate + H(+). In Schizosaccharomyces pombe (strain 972 / ATCC 24843) (Fission yeast), this protein is Phenylalanine--tRNA ligase alpha subunit (frs2).